The chain runs to 241 residues: Protein GrpE (241 aa).

Over residues 28–49 (QNCQKEETQTTNKDNQKEDETF) the composition is skewed to basic and acidic residues. The segment at 28-78 (QNCQKEETQTTNKDNQKEDETFKNQPNKTKQTNTKQQKHLSKESSHQQITK) is disordered. Residues 50–62 (KNQPNKTKQTNTK) are compositionally biased toward low complexity.

It belongs to the GrpE family. In terms of assembly, homodimer.

The protein localises to the cytoplasm. Functionally, participates actively in the response to hyperosmotic and heat shock by preventing the aggregation of stress-denatured proteins, in association with DnaK and GrpE. It is the nucleotide exchange factor for DnaK and may function as a thermosensor. Unfolded proteins bind initially to DnaJ; upon interaction with the DnaJ-bound protein, DnaK hydrolyzes its bound ATP, resulting in the formation of a stable complex. GrpE releases ADP from DnaK; ATP binding to DnaK triggers the release of the substrate protein, thus completing the reaction cycle. Several rounds of ATP-dependent interactions between DnaJ, DnaK and GrpE are required for fully efficient folding. The polypeptide is Protein GrpE (Aster yellows witches'-broom phytoplasma (strain AYWB)).